The sequence spans 127 residues: Glycine cleavage system H protein (127 aa).

A Lipoyl-binding domain is found at 22–104; the sequence is KVRIGITDFA…YEKAWMIVIE (83 aa). K63 is subject to N6-lipoyllysine.

Belongs to the GcvH family. As to quaternary structure, the glycine cleavage system is composed of four proteins: P, T, L and H. The cofactor is (R)-lipoate.

In terms of biological role, the glycine cleavage system catalyzes the degradation of glycine. The H protein shuttles the methylamine group of glycine from the P protein to the T protein. Is also involved in protein lipoylation via its role as an octanoyl/lipoyl carrier protein intermediate. This chain is Glycine cleavage system H protein, found in Geobacillus thermodenitrificans (strain NG80-2).